A 295-amino-acid chain; its full sequence is Probable palmitoyltransferase ZDHHC24 (295 aa).

At 1–20 (MTSFMSRVWCKVESTGRQLP) the chain is on the cytoplasmic side. The helical transmembrane segment at 21 to 41 (IVLNAVLVFSITAEVSYLVLV) threads the bilayer. The Extracellular segment spans residues 42 to 60 (EAPFEPEQKKTDWSTIWTG). Residues 61–81 (LHLFAQYFMLGNITWNASLFV) traverse the membrane as a helical segment. The Cytoplasmic segment spans residues 82–151 (KTNPSIRGVF…HNYRYFLTCL (70 aa)). One can recognise a DHHC domain in the interval 102-152 (RYCYNCETHTPPRCSHCYDCNVCVLRRDHHCVFFGQCVGFHNYRYFLTCLL). Residue cysteine 132 is the S-palmitoyl cysteine intermediate of the active site. A helical transmembrane segment spans residues 152 to 172 (LFMWAGLLYAVVMNAEVFIFI). The Extracellular segment spans residues 173–176 (LKEG). The helical transmembrane segment at 177–197 (VTFHSVMLLLVPWIMLVSGQV) threads the bilayer. Residues 198–203 (TTRAFA) lie on the Cytoplasmic side of the membrane. The helical transmembrane segment at 204 to 224 (FAFIADTCVVGFLLVAAFLFF) threads the bilayer. The Extracellular portion of the chain corresponds to 225-295 (HVALMLRGQT…SLEPKKQAVH (71 aa)).

The protein belongs to the DHHC palmitoyltransferase family.

The protein localises to the membrane. It catalyses the reaction L-cysteinyl-[protein] + hexadecanoyl-CoA = S-hexadecanoyl-L-cysteinyl-[protein] + CoA. Probable palmitoyltransferase that could catalyze the addition of palmitate onto various protein substrates. The sequence is that of Probable palmitoyltransferase ZDHHC24 from Danio rerio (Zebrafish).